Consider the following 1330-residue polypeptide: MPLPLPSRSSKPETKKSRSSKIVPSGNNGQSEKRGENYQEKISSSSPRRLCKKRSAFEDLTNASQSQPAQLKKEANKEFVKDVPKKIKGNTPALGLAKSNEVNMVSYKLESSPGVVSTTLVPNITEKPLILERSTTSGTITTEEASFFRKPLILKEESTTEDTGLIKRSLFLKKFTNKGEISLMEKPTSVQEEADSNDEFVVKLITFGKKHKTEEVAITKGTLSLKKMCTYQEDLALQDITVEENSFFMEPTNFRKKPKTDDVTPTKKMLSLKKKKYITLGKVSRMKKPLVLQKTNSEDESPLIKEPLAFKKKPTKKETTFTLRPLSLKKYTTQGKMAHLKKPLESQNTSGEKALIKEPLSFKKKPITKEESLFQEFSASQEKHTTDREVVLLKKPQVLQEEKDSKDKFLMEPMFLRKKCTTKETNPTKKPLPIKKKCTIQGKMYYLKKPLVLQKTTPGEESFVKEPLSFKKNTTELSMLQEKYTTQEEVSVLKKALTLQKTLTEEESHLKEPLAFKKKHTTEEATPTKKLSSLKRKRFTAQGKRSCLMKPLVLQTSSGEKTHIKEPLSFKKRSAIEESFFKESPVLQEKHTMQGEVALLEKPGALQENVSSEDEFLMEPISFRKTHTTNEVVSTKEPLSLKKKKCTTQITMSICQELLDLQNIISKDKASFFMEPVSLREKSLAEEVILTKTPLSLKKKEITQGKIFLLKKPLVSEKTTSEEESLFKKLLPFNKKSTTEGEFLFQDPSVLQEKHTTPQEVSLSTKPLTLPEKTTTEEEPYIKEPLTLEERPTTKEEFLSQEPFSLHAKPTNEDESLFWKALGLQKTQTKEDSLKKLLTLQEKNTTDEESLLNKPSILKEELSTKVATSIEKELSLKKKPTAQGEVFLLKKQLALQENITNEESLIKQPLAFLKPSIEEAILRESLALQEKPRSEEETLFKEPLSFQEKPTLNEAFHFKEIISLNEKHSTGKELSLKEPLALQENPTQKEDTSLEDSLILQVETSSRVPSTPPESRAGMSSVGKLSTTSKSSVCESSSNKPSSSWGESSQKEMTPLEDIDRNHGDPFFNSIYAKDIFSYMKEREEKFILKEYMNKQTDISSCMRAILVDWLVEVQMTFEMSHETLYLAVKLVDHYLMEVICKRDKLQLLGSTAFLIAAKFEEPCPPCVDDFLYICDDIYQRHEMLSMEISILQTLKFDINIPIAYHFLRRYARCLHASMKTLTLSRFICEMTLQEYDYVQERASKLAAGSFLLALYMMKLRYWVPALEYYSGYKTSDLHPLVKQLNILLTLRPSNKLKTVYSKYSHQVFFEATKIPPLDMLKLEEILNYC.

Positions 1–50 (MPLPLPSRSSKPETKKSRSSKIVPSGNNGQSEKRGENYQEKISSSSPRRL) are disordered. The segment covering 20–30 (SKIVPSGNNGQ) has biased composition (polar residues). The short motif at 54–62 (RSAFEDLTN) is the D-box element. A disordered region spans residues 1002–1059 (VETSSRVPSTPPESRAGMSSVGKLSTTSKSSVCESSSNKPSSSWGESSQKEMTPLEDI). Low complexity predominate over residues 1026–1048 (STTSKSSVCESSSNKPSSSWGES).

The protein belongs to the cyclin family. Cyclin AB subfamily. Interacts with CDK2 kinase. In terms of processing, ubiquitinated. Ubiquitination leads to its degradation during anaphase entry, after degradation of CCNB1.

The protein resides in the nucleus. Functionally, cyclins are positive regulatory subunits of the cyclin-dependent kinases (CDKs), and thereby play an essential role in the control of the cell cycle, notably via their destruction during cell division. Its tissue specificity suggest that it may be required during early meiotic prophase I. The sequence is that of G2/mitotic-specific cyclin-B3 (CCNB3) from Canis lupus familiaris (Dog).